The sequence spans 176 residues: 3-hydroxydecanoyl-[acyl-carrier-protein] dehydratase (176 aa).

Histidine 70 is an active-site residue.

The protein belongs to the thioester dehydratase family. FabA subfamily. As to quaternary structure, homodimer.

The protein resides in the cytoplasm. It carries out the reaction a (3R)-hydroxyacyl-[ACP] = a (2E)-enoyl-[ACP] + H2O. The catalysed reaction is (3R)-hydroxydecanoyl-[ACP] = (2E)-decenoyl-[ACP] + H2O. It catalyses the reaction (2E)-decenoyl-[ACP] = (3Z)-decenoyl-[ACP]. It functions in the pathway lipid metabolism; fatty acid biosynthesis. Functionally, necessary for the introduction of cis unsaturation into fatty acids. Catalyzes the dehydration of (3R)-3-hydroxydecanoyl-ACP to E-(2)-decenoyl-ACP and then its isomerization to Z-(3)-decenoyl-ACP. Can catalyze the dehydratase reaction for beta-hydroxyacyl-ACPs with saturated chain lengths up to 16:0, being most active on intermediate chain length. The chain is 3-hydroxydecanoyl-[acyl-carrier-protein] dehydratase from Alkalilimnicola ehrlichii (strain ATCC BAA-1101 / DSM 17681 / MLHE-1).